Here is a 109-residue protein sequence, read N- to C-terminus: Peptide chaperone MftB (109 aa).

It belongs to the peptide chaperone MftB family. As to quaternary structure, interacts with MftA and MftC.

Its function is as follows. Peptide chaperone involved in the biosynthesis of the enzyme cofactor mycofactocin (MFT). Binds MftA and MftC with high affinity, and is essential for MftC activity on MftA, likely via the formation of a ternary complex. The protein is Peptide chaperone MftB of Mycobacterium ulcerans (strain Agy99).